Here is a 55-residue protein sequence, read N- to C-terminus: Protein SOX-19 (55 aa).

Positions 1–55 (MVWSQIERRKIMEQWPDMHNAEISKRLGKRWKLLPDYEKIPFIKEAERLRLKHMA) form a DNA-binding region, HMG box.

Its subcellular location is the nucleus. The protein is Protein SOX-19 (Sox19) of Mus musculus (Mouse).